Here is a 458-residue protein sequence, read N- to C-terminus: ATP synthase subunit beta (458 aa).

148 to 155 (GGAGVGKT) provides a ligand contact to ATP.

The protein belongs to the ATPase alpha/beta chains family. F-type ATPases have 2 components, CF(1) - the catalytic core - and CF(0) - the membrane proton channel. CF(1) has five subunits: alpha(3), beta(3), gamma(1), delta(1), epsilon(1). CF(0) has three main subunits: a(1), b(2) and c(9-12). The alpha and beta chains form an alternating ring which encloses part of the gamma chain. CF(1) is attached to CF(0) by a central stalk formed by the gamma and epsilon chains, while a peripheral stalk is formed by the delta and b chains.

The protein localises to the cell inner membrane. It catalyses the reaction ATP + H2O + 4 H(+)(in) = ADP + phosphate + 5 H(+)(out). In terms of biological role, produces ATP from ADP in the presence of a proton gradient across the membrane. The catalytic sites are hosted primarily by the beta subunits. This chain is ATP synthase subunit beta, found in Legionella pneumophila (strain Paris).